Here is a 173-residue protein sequence, read N- to C-terminus: Coordinator of PRMT5 and differentiation stimulator (173 aa).

N-acetylmethionine is present on Met1. Residues 1 to 70 are disordered; sequence MDPQAATGRG…EGPSSEEEGF (70 aa). 2 positions are modified to phosphoserine: Ser64 and Ser65.

Interacts with PRMT5. Interacts with histone H4; specifically interacts with the N-terminus of histone H4 but not with histone H3. Interacts with CBFB. Found in a complex with PRMT5, RUNX1 and CBFB.

Its subcellular location is the nucleus. In terms of biological role, histone-binding protein required for histone H4 methyltransferase activity of PRMT5. Specifically required for histone H4 'Arg-3' methylation mediated by PRMT5, but not histone H3 'Arg-8' methylation, suggesting that it modulates the substrate specificity of PRMT5. Specifically interacts with the N-terminus of histone H4 but not with histone H3, suggesting that it acts by promoting the association between histone H4 and PRMT5. Involved in CCNE1 promoter repression. Plays a role in muscle cell differentiation by modulating the recruitment of PRMT5 to the promoter of genes involved in the coordination between cell cycle exit and muscle differentiation. The chain is Coordinator of PRMT5 and differentiation stimulator (Coprs) from Mus musculus (Mouse).